The chain runs to 963 residues: Protein NLP2 (963 aa).

Positions 635–716 (RRPGEKRRTK…IDSVQGVQGS (82 aa)) constitute an RWP-RK domain. Positions 734–755 (MSGTGTSFKNPNAQTENGVSAQ) are enriched in polar residues. The tract at residues 734-794 (MSGTGTSFKN…QSTNTGTTSN (61 aa)) is disordered. Residues 756–794 (GTAAAPKSPPSSSCSHSSGSSTCCSTGANQSTNTGTTSN) are compositionally biased toward low complexity. Residues 862 to 945 (ASKVKATFGE…RTIKISVHEA (84 aa)) enclose the PB1 domain.

The protein localises to the nucleus. In terms of biological role, probable transcription factor. The polypeptide is Protein NLP2 (NLP2) (Arabidopsis thaliana (Mouse-ear cress)).